We begin with the raw amino-acid sequence, 89 residues long: MSLEKASKAAIVADNARGQNDTGSPEVQVALLTARINELNSHFKAHTKDHHSRRGLIMMVNRRKSLLSYLKGKDATRYRDLIVKLGLRK.

Belongs to the universal ribosomal protein uS15 family. Part of the 30S ribosomal subunit. Forms a bridge to the 50S subunit in the 70S ribosome, contacting the 23S rRNA.

In terms of biological role, one of the primary rRNA binding proteins, it binds directly to 16S rRNA where it helps nucleate assembly of the platform of the 30S subunit by binding and bridging several RNA helices of the 16S rRNA. Forms an intersubunit bridge (bridge B4) with the 23S rRNA of the 50S subunit in the ribosome. In Janthinobacterium sp. (strain Marseille) (Minibacterium massiliensis), this protein is Small ribosomal subunit protein uS15.